Reading from the N-terminus, the 451-residue chain is tRNA-2-methylthio-N(6)-dimethylallyladenosine synthase (451 aa).

The 118-residue stretch at 3 to 120 (KKLFIQTHGC…LPEMVNAAGK (118 aa)) folds into the MTTase N-terminal domain. [4Fe-4S] cluster-binding residues include Cys-12, Cys-49, Cys-83, Cys-156, Cys-160, and Cys-163. In terms of domain architecture, Radical SAM core spans 142 to 374 (RVEGAEAFVS…QRRISQQAYD (233 aa)). The TRAM domain maps to 377–441 (LSMVGEVQRI…PNSLLGELVG (65 aa)).

This sequence belongs to the methylthiotransferase family. MiaB subfamily. Monomer. [4Fe-4S] cluster is required as a cofactor.

Its subcellular location is the cytoplasm. The enzyme catalyses N(6)-dimethylallyladenosine(37) in tRNA + (sulfur carrier)-SH + AH2 + 2 S-adenosyl-L-methionine = 2-methylsulfanyl-N(6)-dimethylallyladenosine(37) in tRNA + (sulfur carrier)-H + 5'-deoxyadenosine + L-methionine + A + S-adenosyl-L-homocysteine + 2 H(+). Catalyzes the methylthiolation of N6-(dimethylallyl)adenosine (i(6)A), leading to the formation of 2-methylthio-N6-(dimethylallyl)adenosine (ms(2)i(6)A) at position 37 in tRNAs that read codons beginning with uridine. This chain is tRNA-2-methylthio-N(6)-dimethylallyladenosine synthase, found in Marinomonas sp. (strain MWYL1).